Reading from the N-terminus, the 331-residue chain is Gamma-parvin (331 aa).

N-acetylmethionine is present on Met-1. Positions 17 to 39 are disordered; sequence EPPAEEELSKGGKKKYLPPTSRK. 2 consecutive Calponin-homology (CH) domains span residues 44 to 151 and 210 to 317; these read EELQ…KRFQ and NAVK…CKHT.

It belongs to the parvin family. In terms of assembly, interacts with ILK; the interaction promotes the establishment of cell polarity required for leukocyte migration. Interacts with ARHGEF6; the guanine nucleotide exchange factor activity of ARHGEF6 is essential for the PARVG-induced enhancement of cell spreading. In terms of tissue distribution, expressed predominantly in lymphoid organs, including spleen, thymus, lymph node, bone marrow and peripheral blood leukocytes and moderately in the digestive tract, including stomach, duodenum, jejunum, ileum, ileocecum and appendix, as well as in lung and liver. Also expressed in tumors, but at a lower level than in the corresponding normal tissues.

The protein resides in the cell junction. It is found in the focal adhesion. The protein localises to the cell membrane. Its subcellular location is the cytoplasm. It localises to the cytoskeleton. Its function is as follows. Plays a role with ILK in promoting the cell adhesion and spreading of leukocytes. This chain is Gamma-parvin (PARVG), found in Homo sapiens (Human).